A 93-amino-acid chain; its full sequence is Acylphosphatase (93 aa).

The Acylphosphatase-like domain occupies 5–91 (RAHFLVKGFV…RGETTFRIRS (87 aa)). Catalysis depends on residues R20 and N38.

This sequence belongs to the acylphosphatase family.

It catalyses the reaction an acyl phosphate + H2O = a carboxylate + phosphate + H(+). This chain is Acylphosphatase (acyP), found in Moorella thermoacetica (strain ATCC 39073 / JCM 9320).